Reading from the N-terminus, the 334-residue chain is MEAAHFFEGTEKLLEVWFSRQQSDASQGSGDLRTIPRSEWDVLLKDVQCSIISVTKTDKQEAYVLSESSMFVSKRRFILKTCGTTLLLKALVPLLKLARDYSGFDSIQSFFYSRKNFMKPSHQGYPHRNFQEEIEFLNAIFPNGAAYCMGRMNSDCWYLYTLDFPESRVINQPDQTLEILMSELDPAVMDQFYMKDGVTAKDVTRESGIRDLIPGSVIDATLFNPCGYSMNGMKSDGTYWTIHITPEPEFSYVSFETNLSQTSYDDLIRKVVEVFKPGKFVTTLFVNQSSKCRTVLSSPQKIEGFKRLDCQSAMFNDYNFVFTSFAKKQQQQQS.

Substrate is bound at residue Phe-7. Catalysis depends on residues Glu-8 and Glu-11. Position 67 (Glu-67) interacts with substrate. Ser-68 (schiff-base intermediate with substrate; via pyruvic acid) is an active-site residue. Ser-68 carries the post-translational modification Pyruvic acid (Ser); by autocatalysis. Cys-82 (proton donor; for catalytic activity) is an active-site residue. A substrate-binding site is contributed by Phe-223. Catalysis depends on proton acceptor; for processing activity residues Ser-229 and His-243. Glu-247 is a binding site for substrate. Ser-298 bears the Phosphoserine mark.

The protein belongs to the eukaryotic AdoMetDC family. Heterotetramer of two alpha and two beta chains. Requires pyruvate as cofactor. Post-translationally, is synthesized initially as an inactive proenzyme. Formation of the active enzyme involves a self-maturation process in which the active site pyruvoyl group is generated from an internal serine residue via an autocatalytic post-translational modification. Two non-identical subunits are generated from the proenzyme in this reaction, and the pyruvate is formed at the N-terminus of the alpha chain, which is derived from the carboxyl end of the proenzyme. The post-translation cleavage follows an unusual pathway, termed non-hydrolytic serinolysis, in which the side chain hydroxyl group of the serine supplies its oxygen atom to form the C-terminus of the beta chain, while the remainder of the serine residue undergoes an oxidative deamination to produce ammonia and the pyruvoyl group blocking the N-terminus of the alpha chain.

The catalysed reaction is S-adenosyl-L-methionine + H(+) = S-adenosyl 3-(methylsulfanyl)propylamine + CO2. The protein operates within amine and polyamine biosynthesis; S-adenosylmethioninamine biosynthesis; S-adenosylmethioninamine from S-adenosyl-L-methionine: step 1/1. In terms of biological role, essential for biosynthesis of the polyamines spermidine and spermine. Promotes maintenance and self-renewal of embryonic stem cells, by maintaining spermine levels. This Mesocricetus auratus (Golden hamster) protein is S-adenosylmethionine decarboxylase proenzyme (AMD1).